Reading from the N-terminus, the 750-residue chain is Sulfhydryl oxidase 1 (750 aa).

A signal peptide spans 1 to 32; it reads MRRCGRHSGPPSLLLLLLLLPPLLLSVPGAYA. The 127-residue stretch at 33–159 folds into the Thioredoxin domain; it reads ARLSVLYSSS…RMRLIDALES (127 aa). Residues C73 and C76 each act as nucleophile in the active site. 2 cysteine pairs are disulfide-bonded: C73/C76 and C104/C113. N-linked (GlcNAc...) asparagine glycosylation is found at N133 and N246. The cysteines at positions 396 and 408 are disulfide-linked. Residues 399–506 form the ERV/ALR sulfhydryl oxidase domain; that stretch reads SEPHFRGFPC…EDPQFPKVQW (108 aa). Residues R404, W411, H415, D454, H458, 481-488, K503, and W506 each bind FAD; that span reads WTSHNRVN. Cysteines 452 and 455 form a disulfide. C512 and C515 are joined by a disulfide. Disordered stretches follow at residues 545–567 and 585–632; these read VRDP…ASPN and EQAA…PEHT. A compositionally biased stretch (low complexity) spans 587 to 597; the sequence is AASAASPGATA. The chain crosses the membrane as a helical span at residues 710–730; sequence FLDISLCVGLYSVSFMGLLAM.

The protein belongs to the quiescin-sulfhydryl oxidase (QSOX) family. Monomer. FAD is required as a cofactor. In terms of processing, N-glycosylated. O-glycosylated on Thr and Ser residues. Isoform 3: Detected in seminal vesicle fluid (at protein level). Isoform 1: Detected in brain, hypophysis, heart, testis and the seminal vesicle. Isoform 3: Highly expressed in the seminal vesicles followed by testis, heart, brain, thymus, hypophysis and lung. Also expressed in prostate, kidney, spleen, liver.

Its subcellular location is the golgi apparatus membrane. It is found in the secreted. It carries out the reaction 2 R'C(R)SH + O2 = R'C(R)S-S(R)CR' + H2O2. Its function is as follows. Catalyzes the oxidation of sulfhydryl groups in peptide and protein thiols to disulfides with the reduction of oxygen to hydrogen peroxide. Plays a role in disulfide bond formation in a variety of extracellular proteins. In fibroblasts, required for normal incorporation of laminin into the extracellular matrix, and thereby for normal cell-cell adhesion and cell migration. The chain is Sulfhydryl oxidase 1 (Qsox1) from Rattus norvegicus (Rat).